The chain runs to 1071 residues: ATP-dependent helicase/deoxyribonuclease subunit B (1071 aa).

This sequence belongs to the helicase family. AddB/RexB type 2 subfamily. In terms of assembly, heterodimer of AddA and RexB. The cofactor is Mg(2+).

Functionally, the heterodimer acts as both an ATP-dependent DNA helicase and an ATP-dependent, dual-direction single-stranded exonuclease. Recognizes the chi site generating a DNA molecule suitable for the initiation of homologous recombination. This subunit has 5' -&gt; 3' nuclease activity but not helicase activity. This Streptococcus pyogenes serotype M4 (strain MGAS10750) protein is ATP-dependent helicase/deoxyribonuclease subunit B.